A 404-amino-acid polypeptide reads, in one-letter code: MDFESFFKNELDGLHQEGRYRVFADLARHRGSFPKATRYTADGAQEVTVWCSNDYLGMGQCPIVTEAMKNAIDECGAGAGGTRNISGTNHYHVLLERELADLHGKESALLFTSGYVSNWAALGTLCSKIPGVIVFSDAGNHASMIEGIRHSKCERVIFKHNSVADLEAKLAAADPRAPKIIAFESVYSMDGDIAPIREFCDLADKYGAMTYLDEVHAVGMYGPRGGGIAEREGLMHRLTVIEGTLGKAFGVMGGYITGSAALCDFIRSFASGFIFTTALPPALAAGALASIRHLKESQVERFAHQERVRRLRSLLDQRGIPHMVNPSHIVPVIVGDAAKCKWISDLLLDNFGIYVQPINYPTVPKKTERLRITPTPMHSDADIDHLVSALHSLWSRCALARAVA.

Positions 21 and 136 each coordinate substrate. 3 residues coordinate pyridoxal 5'-phosphate: serine 188, histidine 216, and threonine 244. Lysine 247 is a catalytic residue. Lysine 247 carries the N6-(pyridoxal phosphate)lysine modification. Pyridoxal 5'-phosphate is bound by residues threonine 276 and threonine 277. Threonine 362 serves as a coordination point for substrate.

Belongs to the class-II pyridoxal-phosphate-dependent aminotransferase family. As to quaternary structure, homodimer. The cofactor is pyridoxal 5'-phosphate.

It carries out the reaction succinyl-CoA + glycine + H(+) = 5-aminolevulinate + CO2 + CoA. It participates in porphyrin-containing compound metabolism; protoporphyrin-IX biosynthesis; 5-aminolevulinate from glycine: step 1/1. This chain is 5-aminolevulinate synthase (hemA), found in Rhizobium meliloti (strain 1021) (Ensifer meliloti).